The sequence spans 493 residues: D-glyceraldehyde dehydrogenase (NADP(+)) (493 aa).

Residues 70–92 (RAKELIEKNRAELENIIMEENGK) adopt a coiled-coil conformation. NADP(+) is bound by residues 146 to 149 (TPWN), arginine 157, 172 to 176 (KPSSD), 204 to 210 (RGSEIGD), 225 to 248 (GSTATGQRIMQKASANMAKLILEL), cysteine 281, and 381 to 383 (EIF). Substrate-binding residues include asparagine 149 and arginine 157. Glutamate 247 serves as the catalytic Proton acceptor. Residue cysteine 281 coordinates substrate. Cysteine 281 (proton donor) is an active-site residue.

It belongs to the aldehyde dehydrogenase family. Glyceraldehyde dehydrogenase subfamily. As to quaternary structure, homotetramer. Dimer of dimers.

It carries out the reaction D-glyceraldehyde + NADP(+) + H2O = (R)-glycerate + NADPH + 2 H(+). Its pathway is carbohydrate degradation; glycolysis. Inhibited by calcium, cadmium, copper and mercury ions. Stable for 2 hours at 60 degrees Celsius but activity is decreased to less than 50 percent within 20 minutes at 80 degrees Celsius. Two folds activity enhancement in the presence of 1 mM glutathione, DTT, or 2-mercaptoethanol. Complete activity inhibition by thiol-modifying reagents such as p-chloromercuribenzoic acid or p-hydroxy-mercuribenzoic acid. NADP-dependent dehydrogenase of the nED (non-phosphorylated Entner-Doudoroff) pathway with highest activity towards glyceraldehydes (e.g. D,L-glyceraldehyde and D-glyceraldehyde), to a lesser extent towards D,L-glyceraldehyde-3-phosphate and glycolaldehyde, but no activity towards aliphatic or aromatic aldehydes. This Thermoplasma acidophilum (strain ATCC 25905 / DSM 1728 / JCM 9062 / NBRC 15155 / AMRC-C165) protein is D-glyceraldehyde dehydrogenase (NADP(+)).